The chain runs to 144 residues: MIALIQRVSEAAVRVDGEVVGQIDKGLLVLLGVEKDDDEAKAKRLMERVTTYRVFEDSEGKMNLNVQQVDGKVLVVSQFTLPADTKKGTRAGFSRGAHPADAERLYDYFSDLCQQVLPTERGRFAADMKVSLINDGPVTFWLQV.

Residues 136 to 137 (GP) carry the Gly-cisPro motif, important for rejection of L-amino acids motif.

The protein belongs to the DTD family. As to quaternary structure, homodimer.

The protein localises to the cytoplasm. The catalysed reaction is glycyl-tRNA(Ala) + H2O = tRNA(Ala) + glycine + H(+). It carries out the reaction a D-aminoacyl-tRNA + H2O = a tRNA + a D-alpha-amino acid + H(+). Functionally, an aminoacyl-tRNA editing enzyme that deacylates mischarged D-aminoacyl-tRNAs. Also deacylates mischarged glycyl-tRNA(Ala), protecting cells against glycine mischarging by AlaRS. Acts via tRNA-based rather than protein-based catalysis; rejects L-amino acids rather than detecting D-amino acids in the active site. By recycling D-aminoacyl-tRNA to D-amino acids and free tRNA molecules, this enzyme counteracts the toxicity associated with the formation of D-aminoacyl-tRNA entities in vivo and helps enforce protein L-homochirality. This is D-aminoacyl-tRNA deacylase from Vibrio vulnificus (strain CMCP6).